A 618-amino-acid chain; its full sequence is Glycine--tRNA ligase 2 (618 aa).

Position 187 (Glu187) interacts with glycine. ATP contacts are provided by residues 219-221 (RNE) and 230-231 (RV). Glu238 serves as a coordination point for glycine. An ATP-binding site is contributed by 347–348 (EC). Glycine is bound at residue 466 to 468 (EPS). Position 473 (Arg473) interacts with ATP.

Belongs to the class-II aminoacyl-tRNA synthetase family. Homodimer.

The protein localises to the cytoplasm. It catalyses the reaction tRNA(Gly) + glycine + ATP = glycyl-tRNA(Gly) + AMP + diphosphate. The catalysed reaction is 2 ATP + H(+) = P(1),P(4)-bis(5'-adenosyl) tetraphosphate + diphosphate. Its function is as follows. Catalyzes the ATP-dependent ligation of glycine to the 3'-end of its cognate tRNA, via the formation of an aminoacyl-adenylate intermediate (Gly-AMP). Also produces diadenosine tetraphosphate (Ap4A), a universal pleiotropic signaling molecule needed for cell regulation pathways, by direct condensation of 2 ATPs. Thereby, may play a special role in Ap4A homeostasis. The chain is Glycine--tRNA ligase 2 (GRS2) from Saccharomyces cerevisiae (strain ATCC 204508 / S288c) (Baker's yeast).